Consider the following 482-residue polypeptide: Carbamoyl phosphate synthase large chain, N-terminal section (482 aa).

The segment at 1 to 398 is carboxyphosphate synthetic domain; sequence MESIKKVMVF…ALQKAIRSLD (398 aa). Arg-126, Arg-166, Gly-172, Gly-173, Glu-205, Val-207, Glu-212, Gly-238, Ile-239, His-240, Gln-281, and Glu-295 together coordinate ATP. One can recognise an ATP-grasp domain in the interval 130–324; that stretch reads AEAMAEINEP…IARIAAKIAI (195 aa). Mg(2+) contacts are provided by Gln-281, Glu-295, and Asn-297. Mn(2+)-binding residues include Gln-281, Glu-295, and Asn-297.

Belongs to the CarB family. As to quaternary structure, composed of two chains; the small (or glutamine) chain promotes the hydrolysis of glutamine to ammonia, which is used by the large (or ammonia) chain to synthesize carbamoyl phosphate. Tetramer of heterodimers (alpha,beta)4. It depends on Mg(2+) as a cofactor. Requires Mn(2+) as cofactor.

It catalyses the reaction hydrogencarbonate + L-glutamine + 2 ATP + H2O = carbamoyl phosphate + L-glutamate + 2 ADP + phosphate + 2 H(+). The enzyme catalyses hydrogencarbonate + NH4(+) + 2 ATP = carbamoyl phosphate + 2 ADP + phosphate + 2 H(+). The protein operates within amino-acid biosynthesis; L-arginine biosynthesis; carbamoyl phosphate from bicarbonate: step 1/1. Its pathway is pyrimidine metabolism; UMP biosynthesis via de novo pathway; (S)-dihydroorotate from bicarbonate: step 1/3. Functionally, large subunit of the glutamine-dependent carbamoyl phosphate synthetase (CPSase). CPSase catalyzes the formation of carbamoyl phosphate from the ammonia moiety of glutamine, carbonate, and phosphate donated by ATP, constituting the first step of 2 biosynthetic pathways, one leading to arginine and/or urea and the other to pyrimidine nucleotides. The large subunit (synthetase) binds the substrates ammonia (free or transferred from glutamine from the small subunit), hydrogencarbonate and ATP and carries out an ATP-coupled ligase reaction, activating hydrogencarbonate by forming carboxy phosphate which reacts with ammonia to form carbamoyl phosphate. The protein is Carbamoyl phosphate synthase large chain, N-terminal section (carB1) of Methanocaldococcus jannaschii (strain ATCC 43067 / DSM 2661 / JAL-1 / JCM 10045 / NBRC 100440) (Methanococcus jannaschii).